Consider the following 474-residue polypeptide: Probable glycine dehydrogenase (decarboxylating) subunit 2 (474 aa).

Residue lysine 266 is modified to N6-(pyridoxal phosphate)lysine.

The protein belongs to the GcvP family. C-terminal subunit subfamily. As to quaternary structure, the glycine cleavage system is composed of four proteins: P, T, L and H. In this organism, the P 'protein' is a heterodimer of two subunits. It depends on pyridoxal 5'-phosphate as a cofactor.

It carries out the reaction N(6)-[(R)-lipoyl]-L-lysyl-[glycine-cleavage complex H protein] + glycine + H(+) = N(6)-[(R)-S(8)-aminomethyldihydrolipoyl]-L-lysyl-[glycine-cleavage complex H protein] + CO2. In terms of biological role, the glycine cleavage system catalyzes the degradation of glycine. The P protein binds the alpha-amino group of glycine through its pyridoxal phosphate cofactor; CO(2) is released and the remaining methylamine moiety is then transferred to the lipoamide cofactor of the H protein. This Thermus thermophilus (strain ATCC 27634 / DSM 579 / HB8) protein is Probable glycine dehydrogenase (decarboxylating) subunit 2.